We begin with the raw amino-acid sequence, 272 residues long: Probable ribosomal RNA small subunit methyltransferase A (272 aa).

6 residues coordinate S-adenosyl-L-methionine: asparagine 23, leucine 25, glycine 50, glutamate 71, aspartate 95, and asparagine 110.

The protein belongs to the class I-like SAM-binding methyltransferase superfamily. rRNA adenine N(6)-methyltransferase family. RsmA subfamily.

The protein localises to the cytoplasm. Its function is as follows. Specifically dimethylates two adjacent adenosines in the loop of a conserved hairpin near the 3'-end of 16S rRNA in the 30S particle. May play a critical role in biogenesis of 30S subunits. The sequence is that of Probable ribosomal RNA small subunit methyltransferase A from Thermococcus onnurineus (strain NA1).